We begin with the raw amino-acid sequence, 309 residues long: Ribonuclease Z (309 aa).

Histidine 63, histidine 65, aspartate 67, histidine 68, histidine 145, aspartate 216, and histidine 274 together coordinate Zn(2+). Aspartate 67 serves as the catalytic Proton acceptor.

This sequence belongs to the RNase Z family. In terms of assembly, homodimer. Zn(2+) is required as a cofactor.

The enzyme catalyses Endonucleolytic cleavage of RNA, removing extra 3' nucleotides from tRNA precursor, generating 3' termini of tRNAs. A 3'-hydroxy group is left at the tRNA terminus and a 5'-phosphoryl group is left at the trailer molecule.. In terms of biological role, zinc phosphodiesterase, which displays some tRNA 3'-processing endonuclease activity. Probably involved in tRNA maturation, by removing a 3'-trailer from precursor tRNA. This chain is Ribonuclease Z, found in Streptococcus agalactiae serotype V (strain ATCC BAA-611 / 2603 V/R).